The following is an 864-amino-acid chain: Coiled-coil and C2 domain-containing protein 1B (864 aa).

The disordered stretch occupies residues 82–154 (QDCMTDMTGE…VNSSVAEIQH (73 aa)). Composition is skewed to acidic residues over residues 89–104 (TGED…EELL) and 111–129 (VGEE…EESE). Residues 91–118 (EDDDDDLEEDEELLAELQDVVGEEEEVE) adopt a coiled-coil conformation. Positions 142–154 (EQQVNSSVAEIQH) are enriched in polar residues. A coiled-coil region spans residues 162-209 (GMLQVLEERIGNYKEAISNAKLSNESAKARRYERGLKTLESMLSAARQ). The interval 218–249 (IPPPVACGKPAVSPTTDVPTTDTSKQGLGDLN) is disordered. Residues 229-241 (VSPTTDVPTTDTS) show a composition bias toward low complexity. The stretch at 385 to 412 (VGSLLQALQQRMEKYKSAAQQAKSSGDD) forms a coiled coil. Disordered stretches follow at residues 441–463 (AELP…EEGS) and 478–502 (AGED…PTQL). Over residues 444-453 (PVPPGFPPLP) the composition is skewed to pro residues. 2 coiled-coil regions span residues 464–488 (VEKA…DEDE) and 535–564 (PAVQ…KNDL). A C2 domain is found at 685 to 820 (HFEDKTLKIV…ETQCEIREIV (136 aa)).

It belongs to the CC2D1 family.

This Xenopus laevis (African clawed frog) protein is Coiled-coil and C2 domain-containing protein 1B (cc2d1b).